The following is a 625-amino-acid chain: UvrABC system protein C (625 aa).

In terms of domain architecture, GIY-YIG spans 13–92; sequence DKPGVYIMKD…IKKHRPKFNI (80 aa). One can recognise a UVR domain in the interval 204 to 239; that stretch reads EDIIKKLEKDMKEAADNLEFERAARIRDKINSLKHI.

This sequence belongs to the UvrC family. In terms of assembly, interacts with UvrB in an incision complex.

The protein localises to the cytoplasm. In terms of biological role, the UvrABC repair system catalyzes the recognition and processing of DNA lesions. UvrC both incises the 5' and 3' sides of the lesion. The N-terminal half is responsible for the 3' incision and the C-terminal half is responsible for the 5' incision. The chain is UvrABC system protein C from Acetivibrio thermocellus (strain ATCC 27405 / DSM 1237 / JCM 9322 / NBRC 103400 / NCIMB 10682 / NRRL B-4536 / VPI 7372) (Clostridium thermocellum).